The sequence spans 124 residues: Ribonuclease pancreatic (124 aa).

Over residues 1–13 (KETAAAKFERQHM) the composition is skewed to basic and acidic residues. Residues 1-25 (KETAAAKFERQHMDSSTSSASSSNY) are disordered. Residues K7 and R10 each coordinate substrate. The Proton acceptor role is filled by H12. 4 disulfides stabilise this stretch: C26–C84, C40–C95, C58–C110, and C65–C72. Substrate contacts are provided by residues 41-45 (KPVNT), K66, and R85. The active-site Proton donor is H119.

It belongs to the pancreatic ribonuclease family. Monomer. Interacts with and forms tight 1:1 complexes with RNH1. Dimerization of two such complexes may occur. Interaction with RNH1 inhibits this protein. As to expression, pancreas.

It localises to the secreted. The enzyme catalyses an [RNA] containing cytidine + H2O = an [RNA]-3'-cytidine-3'-phosphate + a 5'-hydroxy-ribonucleotide-3'-[RNA].. The catalysed reaction is an [RNA] containing uridine + H2O = an [RNA]-3'-uridine-3'-phosphate + a 5'-hydroxy-ribonucleotide-3'-[RNA].. Its function is as follows. Endonuclease that catalyzes the cleavage of RNA on the 3' side of pyrimidine nucleotides. Acts on single-stranded and double-stranded RNA. The polypeptide is Ribonuclease pancreatic (RNASE1) (Tragelaphus oryx (Eland)).